The primary structure comprises 749 residues: Homeobox-leucine zipper protein ROC7 (749 aa).

Residues 26 to 98 are disordered; it reads LDQHQQHQHQ…KKRYHRHTQH (73 aa). A compositionally biased stretch (basic and acidic residues) spans 46 to 57; it reads SDGRAPRDELEM. Gly residues predominate over residues 68–79; the sequence is SGGGGGGGGSGG. Over residues 86 to 97 the composition is skewed to basic residues; it reads RPRKKRYHRHTQ. The homeobox DNA-binding region spans 88–147; the sequence is RKKRYHRHTQHQIQELEAFFKECPHPDDKQRKELSRELGLEPLQVKFWFQNKRTQMKTQH. Positions 137 to 218 form a coiled coil; the sequence is QNKRTQMKTQ…DRISAIAAKY (82 aa). Residues 256-494 enclose the START domain; the sequence is ADFDKPLVIE…LERQCERLAS (239 aa).

Belongs to the HD-ZIP homeobox family. Class IV subfamily.

It is found in the nucleus. Its function is as follows. Probable transcription factor. This is Homeobox-leucine zipper protein ROC7 (ROC7) from Oryza sativa subsp. japonica (Rice).